The primary structure comprises 167 residues: uncharacterized protein (167 aa).

Positions 1 to 25 (MPFSVTKFSLIFVALLLAEALVAQS) are cleaved as a signal peptide.

This is an uncharacterized protein from Caenorhabditis elegans.